Here is a 152-residue protein sequence, read N- to C-terminus: Glutaredoxin-related protein 5, mitochondrial (152 aa).

A mitochondrion-targeting transit peptide spans 1 to 31; sequence MSASLSRAAAALLRWGRSAGGGGLPGAGVRA. The region spanning 38–141 is the Glutaredoxin domain; that stretch reads AEQLDALVKK…EELKKLGIRS (104 aa). Position 55 (lysine 55) interacts with glutathione. Lysine 55 carries the N6-succinyllysine modification. Cysteine 63 provides a ligand contact to [2Fe-2S] cluster. Residues 93-97, isoleucine 105, and 118-119 each bind glutathione; these read RQGIK and CD. Serine 151 carries the post-translational modification Phosphoserine.

This sequence belongs to the glutaredoxin family. Monothiol subfamily. In terms of assembly, homodimer. Interacts with ISCU. Interacts with BOLA1. Detected in bone, liver, muscle and kidney.

It localises to the mitochondrion matrix. In terms of biological role, monothiol glutaredoxin involved in mitochondrial iron-sulfur (Fe/S) cluster transfer. Receives 2Fe/2S clusters from scaffold protein ISCU and mediates their transfer to apoproteins, to the 4Fe/FS cluster biosynthesis machinery, or export from mitochondrion. Required for normal regulation of hemoglobin synthesis by the iron-sulfur protein ACO1. The protein is Glutaredoxin-related protein 5, mitochondrial (Glrx5) of Mus musculus (Mouse).